The following is a 154-amino-acid chain: Putative pre-16S rRNA nuclease (154 aa).

This sequence belongs to the YqgF nuclease family.

It is found in the cytoplasm. Its function is as follows. Could be a nuclease involved in processing of the 5'-end of pre-16S rRNA. This chain is Putative pre-16S rRNA nuclease, found in Rickettsia canadensis (strain McKiel).